The primary structure comprises 391 residues: GTPase Obg (391 aa).

One can recognise an Obg domain in the interval 1-159 (MQFVDEATID…RRLRLELKVL (159 aa)). One can recognise an OBG-type G domain in the interval 160 to 333 (ADVGLLGMPN…LVYALMNAIE (174 aa)). Residues 166 to 173 (GMPNAGKS), 191 to 195 (FTTLI), 213 to 216 (DIPG), 283 to 286 (NKID), and 314 to 316 (SAA) each bind GTP. Serine 173 and threonine 193 together coordinate Mg(2+). Residues 367 to 377 (LKAEARQARQN) show a composition bias toward basic and acidic residues. Residues 367 to 391 (LKAEARQARQNDDDDDHDVEVVYEP) form a disordered region. Positions 378–391 (DDDDDHDVEVVYEP) are enriched in acidic residues.

This sequence belongs to the TRAFAC class OBG-HflX-like GTPase superfamily. OBG GTPase family. Monomer. It depends on Mg(2+) as a cofactor.

The protein localises to the cytoplasm. Functionally, an essential GTPase which binds GTP, GDP and possibly (p)ppGpp with moderate affinity, with high nucleotide exchange rates and a fairly low GTP hydrolysis rate. Plays a role in control of the cell cycle, stress response, ribosome biogenesis and in those bacteria that undergo differentiation, in morphogenesis control. This Alcanivorax borkumensis (strain ATCC 700651 / DSM 11573 / NCIMB 13689 / SK2) protein is GTPase Obg.